The primary structure comprises 391 residues: Serine acetyltransferase 3, mitochondrial (391 aa).

2 disordered regions span residues 40-82 (KHHT…HDDE) and 353-375 (VGNPARLLGGKDNPKTHDKIPGL). Positions 45 to 56 (SPPPSPPPPPPM) are enriched in pro residues.

This sequence belongs to the transferase hexapeptide repeat family. Homomultimer. Interacts with OASC. Component of the cysteine synthase complex (CSC) composed of two OAS-TL dimers and one SAT hexamer. In terms of tissue distribution, ubiquitous with higher levels in leaves and siliques. Localized in vascular tissues, particularly in phloem.

The protein localises to the mitochondrion. The catalysed reaction is L-serine + acetyl-CoA = O-acetyl-L-serine + CoA. The protein operates within amino-acid biosynthesis; L-cysteine biosynthesis; L-cysteine from L-serine: step 1/2. The chain is Serine acetyltransferase 3, mitochondrial (SAT3) from Arabidopsis thaliana (Mouse-ear cress).